Here is a 181-residue protein sequence, read N- to C-terminus: Acireductone dioxygenase (181 aa).

Positions 97, 99, 103, and 141 each coordinate Fe(2+). Ni(2+)-binding residues include His-97, His-99, Glu-103, and His-141.

It belongs to the acireductone dioxygenase (ARD) family. Monomer. Requires Fe(2+) as cofactor. Ni(2+) is required as a cofactor.

The catalysed reaction is 1,2-dihydroxy-5-(methylsulfanyl)pent-1-en-3-one + O2 = 3-(methylsulfanyl)propanoate + CO + formate + 2 H(+). The enzyme catalyses 1,2-dihydroxy-5-(methylsulfanyl)pent-1-en-3-one + O2 = 4-methylsulfanyl-2-oxobutanoate + formate + 2 H(+). Its pathway is amino-acid biosynthesis; L-methionine biosynthesis via salvage pathway; L-methionine from S-methyl-5-thio-alpha-D-ribose 1-phosphate: step 5/6. Catalyzes 2 different reactions between oxygen and the acireductone 1,2-dihydroxy-3-keto-5-methylthiopentene (DHK-MTPene) depending upon the metal bound in the active site. Fe-containing acireductone dioxygenase (Fe-ARD) produces formate and 2-keto-4-methylthiobutyrate (KMTB), the alpha-ketoacid precursor of methionine in the methionine recycle pathway. Ni-containing acireductone dioxygenase (Ni-ARD) produces methylthiopropionate, carbon monoxide and formate, and does not lie on the methionine recycle pathway. The protein is Acireductone dioxygenase of Pseudomonas paraeruginosa (strain DSM 24068 / PA7) (Pseudomonas aeruginosa (strain PA7)).